Consider the following 393-residue polypeptide: 4-hydroxyphenylpyruvate dioxygenase (393 aa).

An N-acetylthreonine modification is found at threonine 2. VOC domains are found at residues 18 to 152 (HFHS…KMTF) and 180 to 338 (IIDH…IFTK). Histidine 183 serves as a coordination point for Fe cation. Phosphoserine is present on residues serine 211, serine 226, and serine 250. Histidine 266 and glutamate 349 together coordinate Fe cation.

It belongs to the 4HPPD family. As to quaternary structure, homodimer. Fe cation serves as cofactor. In terms of tissue distribution, liver.

The protein resides in the cytoplasm. It is found in the endoplasmic reticulum membrane. Its subcellular location is the golgi apparatus membrane. The catalysed reaction is 3-(4-hydroxyphenyl)pyruvate + O2 = homogentisate + CO2. It functions in the pathway amino-acid degradation; L-phenylalanine degradation; acetoacetate and fumarate from L-phenylalanine: step 3/6. Functionally, catalyzes the conversion of 4-hydroxyphenylpyruvic acid to homogentisic acid, one of the steps in tyrosine catabolism. This chain is 4-hydroxyphenylpyruvate dioxygenase (HPD), found in Sus scrofa (Pig).